The following is a 450-amino-acid chain: UDP-N-acetylmuramoylalanine--D-glutamate ligase (450 aa).

119 to 125 (GSNGKTT) lines the ATP pocket.

This sequence belongs to the MurCDEF family.

It is found in the cytoplasm. It catalyses the reaction UDP-N-acetyl-alpha-D-muramoyl-L-alanine + D-glutamate + ATP = UDP-N-acetyl-alpha-D-muramoyl-L-alanyl-D-glutamate + ADP + phosphate + H(+). The protein operates within cell wall biogenesis; peptidoglycan biosynthesis. Its function is as follows. Cell wall formation. Catalyzes the addition of glutamate to the nucleotide precursor UDP-N-acetylmuramoyl-L-alanine (UMA). This chain is UDP-N-acetylmuramoylalanine--D-glutamate ligase, found in Streptococcus thermophilus (strain CNRZ 1066).